The chain runs to 545 residues: Chaperonin GroEL (545 aa).

Residues 29–32 (TLGP), Lys-50, 86–90 (DGTTT), Gly-415, and Asp-495 each bind ATP.

The protein belongs to the chaperonin (HSP60) family. As to quaternary structure, forms a cylinder of 14 subunits composed of two heptameric rings stacked back-to-back. Interacts with the co-chaperonin GroES.

The protein localises to the cytoplasm. The enzyme catalyses ATP + H2O + a folded polypeptide = ADP + phosphate + an unfolded polypeptide.. In terms of biological role, together with its co-chaperonin GroES, plays an essential role in assisting protein folding. The GroEL-GroES system forms a nano-cage that allows encapsulation of the non-native substrate proteins and provides a physical environment optimized to promote and accelerate protein folding. This is Chaperonin GroEL from Bacteroides fragilis (strain ATCC 25285 / DSM 2151 / CCUG 4856 / JCM 11019 / LMG 10263 / NCTC 9343 / Onslow / VPI 2553 / EN-2).